A 538-amino-acid polypeptide reads, in one-letter code: Phosphoenolpyruvate carboxykinase (ATP) (538 aa).

Substrate contacts are provided by arginine 61, tyrosine 195, and lysine 201. Residues lysine 201, histidine 220, and 236–244 (GLSGTGKTT) contribute to the ATP site. Mn(2+) contacts are provided by lysine 201 and histidine 220. Aspartate 257 is a binding site for Mn(2+). ATP-binding residues include glutamate 285, arginine 323, and threonine 449. Arginine 323 provides a ligand contact to substrate.

It belongs to the phosphoenolpyruvate carboxykinase (ATP) family. Mn(2+) is required as a cofactor.

The protein localises to the cytoplasm. It carries out the reaction oxaloacetate + ATP = phosphoenolpyruvate + ADP + CO2. It functions in the pathway carbohydrate biosynthesis; gluconeogenesis. Its function is as follows. Involved in the gluconeogenesis. Catalyzes the conversion of oxaloacetate (OAA) to phosphoenolpyruvate (PEP) through direct phosphoryl transfer between the nucleoside triphosphate and OAA. In Afipia carboxidovorans (strain ATCC 49405 / DSM 1227 / KCTC 32145 / OM5) (Oligotropha carboxidovorans), this protein is Phosphoenolpyruvate carboxykinase (ATP).